The primary structure comprises 459 residues: Alcohol acyl transferase 1 allele RGc (459 aa).

Catalysis depends on proton acceptor residues His164 and Asn385.

This sequence belongs to the plant acyltransferase family. As to expression, expressed at very low levels in the skin of ripe fruit.

Functionally, involved in the biosynthesis of volatile esters which confer ripe apple fruit flavor. Alcohol acyl transferase that can use a wide range of alcohols as substrate to produce esters. The polypeptide is Alcohol acyl transferase 1 allele RGc (Malus domestica (Apple)).